A 61-amino-acid chain; its full sequence is UPF0434 protein PST_2635 (61 aa).

The protein belongs to the UPF0434 family.

The sequence is that of UPF0434 protein PST_2635 from Stutzerimonas stutzeri (strain A1501) (Pseudomonas stutzeri).